A 54-amino-acid chain; its full sequence is Relaxin (54 aa).

Pyrrolidone carboxylic acid is present on Gln-1. Cystine bridges form between Cys-13-Cys-41, Cys-25-Cys-54, and Cys-40-Cys-45.

The protein belongs to the insulin family. As to quaternary structure, heterodimer of a B chain and an A chain linked by two disulfide bonds.

The protein localises to the secreted. The function of relaxin in an oviparous species is not yet known. This chain is Relaxin, found in Squalus acanthias (Spiny dogfish).